A 206-amino-acid polypeptide reads, in one-letter code: MAAALLRELGALWVPNLRIWTTQMLRVLPQSCIHTSTSLDISRRWEKKNKIVYPPQLPGEPRRPAEIYHCRRQIKYSKDKMWYLAKLIRGMSIDQALAQLEFNDKKGAQIIKEVLLEAQDMAVRDHNVEFRSNLHIAESTSGRGQCLKRIRYHGRGRFGIMEKVYCHYFVKLVEGPPPRPEAPRTAVDHAKEYIQQLRSRTIIHTL.

The N-terminal 40 residues, 1–40 (MAAALLRELGALWVPNLRIWTTQMLRVLPQSCIHTSTSLD), are a transit peptide targeting the mitochondrion.

Belongs to the universal ribosomal protein uL22 family. As to quaternary structure, component of the mitochondrial ribosome large subunit (39S) which comprises a 16S rRNA and about 50 distinct proteins.

Its subcellular location is the mitochondrion. The sequence is that of Large ribosomal subunit protein uL22m (Mrpl22) from Rattus norvegicus (Rat).